The following is a 520-amino-acid chain: Peptide chain release factor 3 (520 aa).

Residues 8–273 enclose the tr-type G domain; that stretch reads EIRKTFAIIS…AYVDHAPMPS (266 aa). GTP contacts are provided by residues 17-24, 85-89, and 139-142; these read SHPDAGKT, DTPGH, and NKLD.

The protein belongs to the TRAFAC class translation factor GTPase superfamily. Classic translation factor GTPase family. PrfC subfamily.

It localises to the cytoplasm. Its function is as follows. Increases the formation of ribosomal termination complexes and stimulates activities of RF-1 and RF-2. It binds guanine nucleotides and has strong preference for UGA stop codons. It may interact directly with the ribosome. The stimulation of RF-1 and RF-2 is significantly reduced by GTP and GDP, but not by GMP. This Macrococcus caseolyticus (strain JCSC5402) (Macrococcoides caseolyticum) protein is Peptide chain release factor 3.